The chain runs to 449 residues: Adenylosuccinate synthetase (449 aa).

GTP-binding positions include 37–43 and 65–67; these read GDEGKGK and GHT. The Proton acceptor role is filled by aspartate 38. 2 residues coordinate Mg(2+): aspartate 38 and glycine 65. IMP-binding positions include 38–41, 63–66, threonine 155, arginine 169, asparagine 247, threonine 262, and arginine 326; these read DEGK and NAGH. The Proton donor role is filled by histidine 66. Residue 322–328 participates in substrate binding; sequence VTTKRKR. Residues arginine 328, 354 to 356, and 437 to 439 contribute to the GTP site; these read KLD and GVG.

The protein belongs to the adenylosuccinate synthetase family. In terms of assembly, homodimer. Requires Mg(2+) as cofactor.

It is found in the cytoplasm. It catalyses the reaction IMP + L-aspartate + GTP = N(6)-(1,2-dicarboxyethyl)-AMP + GDP + phosphate + 2 H(+). Its pathway is purine metabolism; AMP biosynthesis via de novo pathway; AMP from IMP: step 1/2. Functionally, plays an important role in the de novo pathway and in the salvage pathway of purine nucleotide biosynthesis. Catalyzes the first committed step in the biosynthesis of AMP from IMP. This chain is Adenylosuccinate synthetase, found in Drosophila willistoni (Fruit fly).